Here is a 122-residue protein sequence, read N- to C-terminus: UPF0102 protein Ping_1176 (122 aa).

The protein belongs to the UPF0102 family.

This is UPF0102 protein Ping_1176 from Psychromonas ingrahamii (strain DSM 17664 / CCUG 51855 / 37).